A 338-amino-acid chain; its full sequence is Ketol-acid reductoisomerase (NADP(+)) (338 aa).

The KARI N-terminal Rossmann domain maps to 1–181 (MKVYYDKDCD…GGGRTGIIET (181 aa)). NADP(+) contacts are provided by residues 24–27 (YGSQ), Arg47, Ser50, Thr52, and 82–85 (DEFQ). His107 is an active-site residue. Position 133 (Gly133) interacts with NADP(+). The KARI C-terminal knotted domain occupies 182–327 (TFKDETETDL…EQLRSMMPWI (146 aa)). Mg(2+)-binding residues include Asp190, Glu194, Glu226, and Glu230. Ser251 serves as a coordination point for substrate.

It belongs to the ketol-acid reductoisomerase family. It depends on Mg(2+) as a cofactor.

It carries out the reaction (2R)-2,3-dihydroxy-3-methylbutanoate + NADP(+) = (2S)-2-acetolactate + NADPH + H(+). The enzyme catalyses (2R,3R)-2,3-dihydroxy-3-methylpentanoate + NADP(+) = (S)-2-ethyl-2-hydroxy-3-oxobutanoate + NADPH + H(+). It participates in amino-acid biosynthesis; L-isoleucine biosynthesis; L-isoleucine from 2-oxobutanoate: step 2/4. The protein operates within amino-acid biosynthesis; L-valine biosynthesis; L-valine from pyruvate: step 2/4. Functionally, involved in the biosynthesis of branched-chain amino acids (BCAA). Catalyzes an alkyl-migration followed by a ketol-acid reduction of (S)-2-acetolactate (S2AL) to yield (R)-2,3-dihydroxy-isovalerate. In the isomerase reaction, S2AL is rearranged via a Mg-dependent methyl migration to produce 3-hydroxy-3-methyl-2-ketobutyrate (HMKB). In the reductase reaction, this 2-ketoacid undergoes a metal-dependent reduction by NADPH to yield (R)-2,3-dihydroxy-isovalerate. This is Ketol-acid reductoisomerase (NADP(+)) from Pseudomonas fluorescens (strain SBW25).